The following is a 186-amino-acid chain: UPF0397 protein LBUL_1584 (186 aa).

A run of 5 helical transmembrane segments spans residues 13–33, 46–66, 79–99, 114–134, and 150–170; these read IAAL…ASIP, AFLA…VGFI, TWWN…LYAL, VIFN…LGSV, and QAGL…TILL.

Belongs to the UPF0397 family.

It localises to the cell membrane. The polypeptide is UPF0397 protein LBUL_1584 (Lactobacillus delbrueckii subsp. bulgaricus (strain ATCC BAA-365 / Lb-18)).